A 459-amino-acid chain; its full sequence is Probable acetate kinase (459 aa).

Asparagine 9 is a Mg(2+) binding site. Position 16 (lysine 16) interacts with ATP. Residue arginine 100 coordinates substrate. Catalysis depends on aspartate 156, which acts as the Proton donor/acceptor. ATP contacts are provided by residues 216–220 (HLGSG) and 299–301 (DFR). Residues 308–338 (TTTSSPTPSPNPNPNPNPDPNPDPNPDPQNQ) are disordered. Pro residues predominate over residues 314–334 (TPSPNPNPNPNPDPNPDPNPD). A Mg(2+)-binding site is contributed by glutamate 441.

The protein belongs to the acetokinase family. The cofactor is Mg(2+).

The enzyme catalyses acetate + ATP = acetyl phosphate + ADP. It functions in the pathway metabolic intermediate biosynthesis; acetyl-CoA biosynthesis; acetyl-CoA from acetate: step 1/2. This chain is Probable acetate kinase, found in Chaetomium globosum (strain ATCC 6205 / CBS 148.51 / DSM 1962 / NBRC 6347 / NRRL 1970) (Soil fungus).